Consider the following 726-residue polypeptide: Probable cyclic nucleotide-gated ion channel 14 (726 aa).

Over 1-86 (MEFKRDNTVR…GDAVLQWNRV (86 aa)) the chain is Cytoplasmic. A helical transmembrane segment spans residues 87–107 (FLFWCLVALYVDPLFFFLSSV). Topologically, residues 108 to 122 (KRIGRSSCMTTDLKL) are extracellular. The helical transmembrane segment at 123–143 (GIVITFFRTLADLFYVLHIVI) threads the bilayer. Topologically, residues 144–177 (KFRTAYVSRTSRVFGRGELVKDPKLIARRYLRSD) are cytoplasmic. The chain crosses the membrane as a helical span at residues 178 to 198 (FIVDLIACLPLPQIVSWFILP). Over 199-211 (SIRSSHSDHTTNA) the chain is Extracellular. Residues 212–232 (LVLIVLVQYIPRLYLIFPLSA) traverse the membrane as a helical segment. Over 233 to 252 (EIIKATGVVTTTAWAGAAYN) the chain is Cytoplasmic. Residues 253–273 (LLQYMLASHILGSAWYLLSIE) form a helical membrane-spanning segment. Residues 274-377 (RQATCWKAEC…LSTSTSVLET (104 aa)) are Extracellular-facing. A helical transmembrane segment spans residues 378–398 (MFAILVAIFGLVLFALLIGNM). At 399–726 (QTYLQSITVR…PDEPDFSVDD (328 aa)) the chain is on the cytoplasmic side. A nucleoside 3',5'-cyclic phosphate contacts are provided by residues 481 to 605 (LFAQ…SKKL) and Glu-552. Residues 597-612 (FRRLHSKKLQHTFRYY) are calmodulin-binding. The IQ domain maps to 617 to 646 (RTWAACFVQVAWRRYKRKKLAKSLSLAESF). Residues 707–726 (KDVEIPMLPKPDEPDFSVDD) form a disordered region.

Belongs to the cyclic nucleotide-gated cation channel (TC 1.A.1.5) family. As to quaternary structure, homotetramer or heterotetramer.

The protein localises to the cell membrane. Probable cyclic nucleotide-gated ion channel. This Arabidopsis thaliana (Mouse-ear cress) protein is Probable cyclic nucleotide-gated ion channel 14 (CNGC14).